Consider the following 329-residue polypeptide: Coiled-coil domain-containing protein 54 (329 aa).

Positions 86 to 149 (NIVSSISNIQ…VTELESQNSY (64 aa)) form a coiled coil. The segment covering 178–191 (TPKGTATSPDTVIS) has biased composition (polar residues). The interval 178–214 (TPKGTATSPDTVISSAEPERVSSYPEPTGELKKKTTS) is disordered. Phosphothreonine is present on Thr-182.

This Mus musculus (Mouse) protein is Coiled-coil domain-containing protein 54 (Ccdc54).